The sequence spans 654 residues: DNA ligase (654 aa).

NAD(+) contacts are provided by residues 34–38 (DLEYD), 83–84 (SL), and E114. The active-site N6-AMP-lysine intermediate is K116. Residues R137, E171, K280, and K304 each coordinate NAD(+). Positions 396, 399, 414, and 419 each coordinate Zn(2+). The 78-residue stretch at 577–654 (VISTILSGYT…EEQFYDLIKQ (78 aa)) folds into the BRCT domain.

Belongs to the NAD-dependent DNA ligase family. LigA subfamily. It depends on Mg(2+) as a cofactor. Mn(2+) serves as cofactor.

The catalysed reaction is NAD(+) + (deoxyribonucleotide)n-3'-hydroxyl + 5'-phospho-(deoxyribonucleotide)m = (deoxyribonucleotide)n+m + AMP + beta-nicotinamide D-nucleotide.. Its function is as follows. DNA ligase that catalyzes the formation of phosphodiester linkages between 5'-phosphoryl and 3'-hydroxyl groups in double-stranded DNA using NAD as a coenzyme and as the energy source for the reaction. It is essential for DNA replication and repair of damaged DNA. This is DNA ligase from Mycoplasmopsis agalactiae (strain NCTC 10123 / CIP 59.7 / PG2) (Mycoplasma agalactiae).